The following is a 366-amino-acid chain: Probable glucuronokinase 2 (366 aa).

Proline 126–alanine 136 provides a ligand contact to ATP. Aspartate 179 (proton acceptor) is an active-site residue.

Belongs to the GHMP kinase family. Mg(2+) serves as cofactor. The cofactor is Mn(2+). Requires Co(2+) as cofactor.

It catalyses the reaction D-glucuronate + ATP = 1-phospho-alpha-D-glucuronate + ADP + H(+). Functionally, sugar-1-kinase with a strict substrate specificity for D-glucuronic acid and ATP. Involved in the biosynthesis of UDP-glucuronic acid (UDP-GlcA), providing nucleotide sugars for cell-wall polymers. May be also involved in a salvage pathway for glucuronic acid. The sequence is that of Probable glucuronokinase 2 (GLCAK2) from Arabidopsis thaliana (Mouse-ear cress).